The primary structure comprises 138 residues: Small ribosomal subunit protein uS11c (138 aa).

This sequence belongs to the universal ribosomal protein uS11 family. In terms of assembly, part of the 30S ribosomal subunit.

The protein resides in the plastid. The protein is Small ribosomal subunit protein uS11c of Cuscuta obtusiflora (Peruvian dodder).